An 889-amino-acid chain; its full sequence is MESHGDEGEPSAMAKPPKKLPMSRKGFGTRGQSIQLLTNHFRVSVRRMDGHFYHYHVEVKYEDGGPVEAKGVCRRVVDKLQETYASELAGREFAYNGEKGLFTAGALLQTKHQFVVVMEDASSSGRTTTRRSSGGDDGSPGGSDRKRMKRPMAVKKFMVEISFAAKDPMSAIAEVLRGQETENSMEALRVLDITLRQHSAKHARDTASCPSYPSAMDGWMKTGVPKGGREKISCRGFHSSFRPTDSGLSLNVDVSTTMIVRPGPVIEFLLFNQNIKNPHEIDWGKAKCALKNLRIKTTHTGSEFRIIGLSEDTCYSQTFQIKRKNGNGGSDTVEEVTVFEYYRKNWKIDLKGSAHFPCLNVGKPKRPTYIPLELCHLVPLQRYKKALSTLQRSTLVERSRQNPQERMFVLSGVLRDSDYNSVPMLRECGISIAQEFTQVAARVLPAPKLKSGDGEDIFARNGRWNFNKNRLIQPKRVQRWVVVNFSAQCNAHHLAQRLIHCGNLKGLPVDPEDHVFQERSHMGRERAETRVNDMFQQLLSGDKPSFVLCVLPERKNCDIYGPWKRMCLVKYGIVTQCLAPTKINDQYLTNVLLKINAKLGGLNSLLQIERNQAIPLLSKTPTIILGMDVSHGSPGRDDVPSVAAVVSSLEWPLISKYKASVCTQSPRLEMIDSLFKLVGNEDHVIIRESLMDFYNSSRGHKDGVSEGQFNQVLNIELAQIIKACEFLANEKNDSEWSPKFTVIVAQKNHHTKFFQTDRSNKVVNVPPGTVVDKGICHPRNCDFYMCAHAGMIGTTRPTHYHVLHDENNFTPDDLQELVHNLSYVYQRSTTAISGVAPICYAHLAAAQVSQFVRLDDAASEGSGDGGAPPRPVPELPRLHPDVRQSMFFC.

Disordered regions lie at residues 1–26 and 119–150; these read MESHGDEGEPSAMAKPPKKLPMSRKG and EDASSSGRTTTRRSSGGDDGSPGGSDRKRMKR. Residues 122–132 are compositionally biased toward low complexity; that stretch reads SSSGRTTTRRS. Residues 264–379 enclose the PAZ domain; it reads PVIEFLLFNQ…IPLELCHLVP (116 aa). Positions 546-853 constitute a Piwi domain; it reads FVLCVLPERK…AAAQVSQFVR (308 aa). The tract at residues 857-878 is disordered; that stretch reads AASEGSGDGGAPPRPVPELPRL.

Belongs to the argonaute family. Ago subfamily.

Probably involved in the RNA silencing pathway. May bind to short RNAs such as microRNAs (miRNAs) or short interfering RNAs (siRNAs), and represses the translation of mRNAs which are complementary to them. The protein is Protein argonaute 15 (AGO15) of Oryza sativa subsp. japonica (Rice).